A 97-amino-acid chain; its full sequence is Osteocalcin (97 aa).

The first 18 residues, 1–18, serve as a signal peptide directing secretion; sequence MKTLAFLVLCSLAAICLT. A propeptide spanning residues 19–52 is cleaved from the precursor; the sequence is SDASTGSQPASDNPADEGMFVERDQASAVVRQKR. Positions 53-93 constitute a Gla domain; that stretch reads AAGQLSLTQLESLREVCELNLACEHMMDTEGIIAAYTAYYG. Ca(2+) contacts are provided by glutamate 63, glutamate 67, glutamate 70, and glutamate 76. 4-carboxyglutamate occurs at positions 63, 67, and 70. The cysteines at positions 69 and 75 are disulfide-linked.

Belongs to the osteocalcin/matrix Gla protein family. In terms of processing, gamma-carboxyglutamate residues are formed by vitamin K dependent carboxylation by GGCX. These residues are essential for the binding of calcium.

It localises to the secreted. Its function is as follows. The carboxylated form is one of the main organic components of the bone matrix, which constitutes 1-2% of the total bone protein. The carboxylated form binds strongly to apatite and calcium. This chain is Osteocalcin (bglap), found in Sparus aurata (Gilthead sea bream).